A 361-amino-acid polypeptide reads, in one-letter code: MAGNSIGQHFRVTTFGESHGIALGCIVDGCPPGLEITEADLQTDLDRRRPGTSRYTTQRREPDEVKILSGVFEGKTTGTSIGLLIENTDQRSKDYSDIKDKFRPGHADYTYHQKYGIRDYRGGGRSSARETAMRVAAGAIAKKYLKDEFGVEIRAYLSQMGDVSIDKVDWDEIENNAFFCPDADKVEAFDQLIRDLKKEGDSIGAKIQVVATNVPVGLGEPVFDRLDADIAHALMSINAVKGVEIGDGFDVVNQKGSQHRDPLSPQGFGSNHAGGILGGISTGQDIVANIALKPTSSITVPGDTITKEGEPTQLITKGRHDPCVGIRAVPIAEAMLAIVVMDHLLRHRGQNHGVTTETPKI.

NADP(+) contacts are provided by Arg-48 and Arg-54. Residues Arg-125–Ser-127, Asn-238–Ala-239, Gly-278, Lys-293–Ser-297, and Arg-319 contribute to the FMN site.

It belongs to the chorismate synthase family. Homotetramer. Requires FMNH2 as cofactor.

The enzyme catalyses 5-O-(1-carboxyvinyl)-3-phosphoshikimate = chorismate + phosphate. The protein operates within metabolic intermediate biosynthesis; chorismate biosynthesis; chorismate from D-erythrose 4-phosphate and phosphoenolpyruvate: step 7/7. Functionally, catalyzes the anti-1,4-elimination of the C-3 phosphate and the C-6 proR hydrogen from 5-enolpyruvylshikimate-3-phosphate (EPSP) to yield chorismate, which is the branch point compound that serves as the starting substrate for the three terminal pathways of aromatic amino acid biosynthesis. This reaction introduces a second double bond into the aromatic ring system. This Vibrio parahaemolyticus serotype O3:K6 (strain RIMD 2210633) protein is Chorismate synthase.